We begin with the raw amino-acid sequence, 169 residues long: N-alpha-acetyltransferase 50 (169 aa).

An N-acetyltransferase domain is found at 6–155 (IELGDVTPHN…DAHVLQKNLK (150 aa)). A Phosphothreonine modification is found at threonine 12. A substrate-binding site is contributed by tyrosine 31. Residues lysine 34 and lysine 37 each carry the N6-acetyllysine modification. The active site involves tyrosine 73. Substrate is bound at residue methionine 75. 77–90 (LGCLAPYRRLGIGT) serves as a coordination point for acetyl-CoA. Tyrosine 110 is subject to Phosphotyrosine. The active site involves histidine 112. 117–126 (NESAIDFYRK) contributes to the CoA binding site. The segment at 138–141 (YYKR) is substrate. At lysine 140 the chain carries N6-acetyllysine.

Belongs to the acetyltransferase family. GNAT subfamily. As to quaternary structure, component of the N-terminal acetyltransferase E (NatE) complex at least composed of NAA10, NAA15 and NAA50. Interacts with NAA10. Interacts with NAA15. Predominantly interacts with NAA15 in the N-terminal acetyltransferase A complex (NatA complex); the interactions reduce the acetylation activity of the NatA complex. Component of the N-terminal acetyltransferase E (NatE)/HYPK complex at least composed of NAA10, NAA15, NAA50 and HYPK. Within the complex interacts with NAA15. Its capacity to interact with the NatA complex is reduced by HYPK. Interacts with NAA35.

It is found in the cytoplasm. The protein resides in the nucleus. It catalyses the reaction N-terminal L-methionyl-L-alanyl-[protein] + acetyl-CoA = N-terminal N(alpha)-acetyl-L-methionyl-L-alanyl-[protein] + CoA + H(+). The enzyme catalyses N-terminal L-methionyl-L-seryl-[protein] + acetyl-CoA = N-terminal N(alpha)-acetyl-L-methionyl-L-seryl-[protein] + CoA + H(+). It carries out the reaction N-terminal L-methionyl-L-valyl-[protein] + acetyl-CoA = N-terminal N(alpha)-acetyl-L-methionyl-L-valyl-[protein] + CoA + H(+). The catalysed reaction is N-terminal L-methionyl-L-threonyl-[protein] + acetyl-CoA = N-terminal N(alpha)-acetyl-L-methionyl-L-threonyl-[protein] + CoA + H(+). It catalyses the reaction N-terminal L-methionyl-L-lysyl-[protein] + acetyl-CoA = N-terminal N(alpha)-acetyl-L-methionyl-L-lysyl-[protein] + CoA + H(+). The enzyme catalyses N-terminal L-methionyl-L-leucyl-[protein] + acetyl-CoA = N-terminal N(alpha)-acetyl-L-methionyl-L-leucyl-[protein] + CoA + H(+). It carries out the reaction N-terminal L-methionyl-L-phenylalanyl-[protein] + acetyl-CoA = N-terminal N(alpha)-acetyl-L-methionyl-L-phenylalanyl-[protein] + CoA + H(+). The catalysed reaction is N-terminal L-methionyl-L-tyrosyl-[protein] + acetyl-CoA = N-terminal N(alpha)-acetyl-L-methionyl-L-tyrosyl-[protein] + CoA + H(+). Functionally, N-alpha-acetyltransferase that acetylates the N-terminus of proteins that retain their initiating methionine. Has a broad substrate specificity: able to acetylate the initiator methionine of most peptides, except for those with a proline in second position. Also displays N-epsilon-acetyltransferase activity by mediating acetylation of the side chain of specific lysines on proteins. Autoacetylates in vivo. The relevance of N-epsilon-acetyltransferase activity is however unclear: able to acetylate H4 in vitro, but this result has not been confirmed in vivo. Component of N-alpha-acetyltransferase complexes containing NAA10 and NAA15, which has N-alpha-acetyltransferase activity. Does not influence the acetyltransferase activity of NAA10. However, it negatively regulates the N-alpha-acetyltransferase activity of the N-terminal acetyltransferase A complex (also called the NatA complex). The multiprotein complexes probably constitute the major contributor for N-terminal acetylation at the ribosome exit tunnel, with NAA10 acetylating all amino termini that are devoid of methionine and NAA50 acetylating other peptides. Required for sister chromatid cohesion during mitosis by promoting binding of CDCA5/sororin to cohesin: may act by counteracting the function of NAA10. This chain is N-alpha-acetyltransferase 50 (NAA50), found in Bos taurus (Bovine).